The primary structure comprises 621 residues: tRNA uridine 5-carboxymethylaminomethyl modification enzyme MnmG (621 aa).

8-13 (GAGHAG) contacts FAD. 269–283 (GPRYCPSIEDKIHRF) serves as a coordination point for NAD(+).

This sequence belongs to the MnmG family. As to quaternary structure, homodimer. Heterotetramer of two MnmE and two MnmG subunits. It depends on FAD as a cofactor.

Its subcellular location is the cytoplasm. In terms of biological role, NAD-binding protein involved in the addition of a carboxymethylaminomethyl (cmnm) group at the wobble position (U34) of certain tRNAs, forming tRNA-cmnm(5)s(2)U34. This chain is tRNA uridine 5-carboxymethylaminomethyl modification enzyme MnmG, found in Chlorobium phaeovibrioides (strain DSM 265 / 1930) (Prosthecochloris vibrioformis (strain DSM 265)).